Consider the following 516-residue polypeptide: UDP-N-acetylmuramyl-tripeptide synthetase (516 aa).

UDP-N-acetyl-alpha-D-muramoyl-L-alanyl-D-glutamate is bound at residue serine 38. 116-122 (GTKGKTT) is an ATP binding site. Residues 162 to 163 (TT), serine 189, and arginine 197 each bind UDP-N-acetyl-alpha-D-muramoyl-L-alanyl-D-glutamate. Lysine 231 is subject to N6-carboxylysine.

This sequence belongs to the MurCDEF family. MurE subfamily. Carboxylation is probably crucial for Mg(2+) binding and, consequently, for the gamma-phosphate positioning of ATP.

Its subcellular location is the cytoplasm. It functions in the pathway cell wall biogenesis; peptidoglycan biosynthesis. Its function is as follows. Catalyzes the addition of an amino acid to the nucleotide precursor UDP-N-acetylmuramoyl-L-alanyl-D-glutamate (UMAG) in the biosynthesis of bacterial cell-wall peptidoglycan. This Lactobacillus delbrueckii subsp. bulgaricus (strain ATCC 11842 / DSM 20081 / BCRC 10696 / JCM 1002 / NBRC 13953 / NCIMB 11778 / NCTC 12712 / WDCM 00102 / Lb 14) protein is UDP-N-acetylmuramyl-tripeptide synthetase.